Consider the following 415-residue polypeptide: Serine--tRNA ligase (415 aa).

231–233 (TAE) provides a ligand contact to L-serine. 262–264 (RSE) serves as a coordination point for ATP. E285 lines the L-serine pocket. 349–352 (EISS) provides a ligand contact to ATP. Position 383 (S383) interacts with L-serine.

The protein belongs to the class-II aminoacyl-tRNA synthetase family. Type-1 seryl-tRNA synthetase subfamily. As to quaternary structure, homodimer. The tRNA molecule binds across the dimer.

It is found in the cytoplasm. The catalysed reaction is tRNA(Ser) + L-serine + ATP = L-seryl-tRNA(Ser) + AMP + diphosphate + H(+). It catalyses the reaction tRNA(Sec) + L-serine + ATP = L-seryl-tRNA(Sec) + AMP + diphosphate + H(+). It functions in the pathway aminoacyl-tRNA biosynthesis; selenocysteinyl-tRNA(Sec) biosynthesis; L-seryl-tRNA(Sec) from L-serine and tRNA(Sec): step 1/1. In terms of biological role, catalyzes the attachment of serine to tRNA(Ser). Is also able to aminoacylate tRNA(Sec) with serine, to form the misacylated tRNA L-seryl-tRNA(Sec), which will be further converted into selenocysteinyl-tRNA(Sec). The sequence is that of Serine--tRNA ligase from Helicobacter pylori (strain J99 / ATCC 700824) (Campylobacter pylori J99).